The primary structure comprises 1182 residues: Phosphatidylinositol 3-kinase age-1 (1182 aa).

Positions 1–16 (MSMGRSPSTTFRSRTG) are enriched in polar residues. Positions 1–24 (MSMGRSPSTTFRSRTGSHGARDLI) are disordered. The PI3K-ABD domain maps to 74 to 174 (NEGVADIITM…FPMLFLYQPD (101 aa)). Positions 266–358 (KRKAEINGVC…YRCPGFVVRR (93 aa)) constitute a PI3K-RBD domain. The C2 PI3K-type domain occupies 425–577 (LDANLMIRPV…SSYGGRVRMP (153 aa)). A PIK helical domain is found at 601 to 788 (DDYESCIRDP…SLLMEAYLRG (188 aa)). The region spanning 853 to 1168 (IIDKAIVLGS…IYEEAFNGSW (316 aa)) is the PI3K/PI4K catalytic domain. Positions 859–865 (VLGSAKR) are G-loop. Residues 1028–1036 (GIKDRHSDN) are catalytic loop. The activation loop stretch occupies residues 1047-1073 (HIDFGHILGHGKTKLGIQRDRQPFILT).

It belongs to the PI3/PI4-kinase family.

It catalyses the reaction a 1,2-diacyl-sn-glycero-3-phospho-(1D-myo-inositol) + ATP = a 1,2-diacyl-sn-glycero-3-phospho-(1D-myo-inositol-3-phosphate) + ADP + H(+). Functionally, phosphatidylinositol 3-kinase homolog that regulates longevity and diapause. Promotes cell survival during embryonic development by recruiting akt-1/2 to the plasma membrane through the production of PtdIns(3,4,5)P3. Could function in the development or neuroendocrine signaling of the dauer pathway. Mediates susceptibility to enteropathogenic E.coli infection. May negatively regulate AYI interneuron neurite outgrowth. Plays a role in aversive olfactory learning when an odor is associated with food deprivation. Regulates this process by promoting the nuclear relocalization of egl-4 in AWC olfactory neurons after odor conditioning. This chain is Phosphatidylinositol 3-kinase age-1, found in Caenorhabditis elegans.